The chain runs to 545 residues: MTKLTQQDAWAQLEAQAAKLPHMRELFEADPQRFDKMSLSACGLLLDYSKNRADEQTLEQLFKLAKSAGLSDKIHAMFDGEIINNTEKRAVLHTALRAEADEVILVDGQNIVPEVKQTQAKMAKFVEAVTSGEWKGYTGKAITDIVSIGIGGSFLGPKIVTQALRPYWNPALKCHFVANVDATSLCEKLRLVDPETTLFVMSSKSFGTQETLTNTLSAKAWFLKNGGTQVDIAKHFVAVTSNVAKATEFGMDADNIFPMWDWVGGRYSLWSAIGLPIALLIGMDNFYQLLAGAKSMDKHFVEAPLEQNMPVIMGLFSLLYGNFYQAQSHVVLTYDHYLRGLPAYFQQLDMESNGKSVTLNGDNVDHATGPVIWGGEGTNGQHAYHQLLHQGTALIPADFILPLQSHNPLGEHHVQLASNCFGQTQALMQGRTFDEALAELDGSSQSQEEKALIAKHKVMEGNKPSNTLLMDKLTPETLGALIALYEHRTFVQGAIWDINSFDQWGVELGKTLGNDVLARLQSDEEAKALDASSNALINLFRRGHL.

The Proton donor role is filled by E351. Active-site residues include H382 and K510.

The protein belongs to the GPI family.

The protein resides in the cytoplasm. It catalyses the reaction alpha-D-glucose 6-phosphate = beta-D-fructose 6-phosphate. It participates in carbohydrate biosynthesis; gluconeogenesis. It functions in the pathway carbohydrate degradation; glycolysis; D-glyceraldehyde 3-phosphate and glycerone phosphate from D-glucose: step 2/4. Functionally, catalyzes the reversible isomerization of glucose-6-phosphate to fructose-6-phosphate. The sequence is that of Glucose-6-phosphate isomerase from Shewanella loihica (strain ATCC BAA-1088 / PV-4).